A 116-amino-acid chain; its full sequence is Large ribosomal subunit protein bL17 (116 aa).

Belongs to the bacterial ribosomal protein bL17 family. As to quaternary structure, part of the 50S ribosomal subunit. Contacts protein L32.

This chain is Large ribosomal subunit protein bL17, found in Helicobacter hepaticus (strain ATCC 51449 / 3B1).